Here is a 210-residue protein sequence, read N- to C-terminus: Cytochrome c4 (210 aa).

The signal sequence occupies residues 1–20; sequence MNKALVTLLLTLGITGLAHA. Heme c contacts are provided by C34, C37, H38, M86, C139, C142, H143, and M187.

In terms of processing, binds 2 heme c groups covalently per subunit.

Its subcellular location is the periplasm. In terms of biological role, diheme, high potential cytochrome c believed to be an intermediate electron donor to terminal oxidation systems. The protein is Cytochrome c4 (cycA) of Azotobacter vinelandii.